The sequence spans 326 residues: ATPase GET3 (326 aa).

An ATP-binding site is contributed by 32 to 39; the sequence is KGGVGKTT. The active site involves aspartate 61. ATP is bound by residues glutamate 244 and asparagine 271. 2 residues coordinate Zn(2+): cysteine 282 and cysteine 285.

The protein belongs to the arsA ATPase family. Homodimer.

The protein localises to the cytoplasm. Its subcellular location is the endoplasmic reticulum. Its function is as follows. ATPase required for the post-translational delivery of tail-anchored (TA) proteins to the endoplasmic reticulum. Recognizes and selectively binds the transmembrane domain of TA proteins in the cytosol. This complex then targets to the endoplasmic reticulum by membrane-bound receptors, where the tail-anchored protein is released for insertion. This process is regulated by ATP binding and hydrolysis. ATP binding drives the homodimer towards the closed dimer state, facilitating recognition of newly synthesized TA membrane proteins. ATP hydrolysis is required for insertion. Subsequently, the homodimer reverts towards the open dimer state, lowering its affinity for the membrane-bound receptor, and returning it to the cytosol to initiate a new round of targeting. In Phaeosphaeria nodorum (strain SN15 / ATCC MYA-4574 / FGSC 10173) (Glume blotch fungus), this protein is ATPase GET3.